The chain runs to 611 residues: Rop guanine nucleotide exchange factor 5 (611 aa).

The disordered stretch occupies residues 1 to 62 (MENLVKSCAG…PPPPPSQILG (62 aa)). A compositionally biased stretch (low complexity) spans 34 to 51 (STSGASYESSSTTTVASS). The PRONE domain maps to 93–477 (FKAKEMNSAD…DLTKQSDDNN (385 aa)). 2 disordered regions span residues 513–541 (TTPG…TNKI) and 588–611 (DVEE…YTVS). Basic and acidic residues predominate over residues 525-541 (KKGERRTPYSSKDTNKI).

Guanine-nucleotide exchange factor (GEF) that acts as an activator of Rop (Rho of plants) GTPases by promoting the exchange of GDP for GTP. The protein is Rop guanine nucleotide exchange factor 5 (ROPGEF5) of Arabidopsis thaliana (Mouse-ear cress).